A 525-amino-acid polypeptide reads, in one-letter code: Retinoblastoma-binding-like protein E (525 aa).

5 WD repeats span residues 25–66, 69–108, 222–261, 267–312, and 313–352; these read PKNI…IVRT, HHTGCVNSISWSRNGKKLLTASNDGSLVLWDLATSKILYS, SSNTTVKQIEFSRNHRFMLVSSSDKVLRLISLESTNLYQQ, DSVN…KDLE, and GPKEGLVDVVWHPLRPIIVSISFTGVIYVWTAYFEENWSS. Disordered regions lie at residues 371–398 and 462–525; these read DEFDAKDSDNENQEVNNNNNNNIGRNPY and EKYQ…KKRK. The segment covering 383 to 392 has biased composition (low complexity); sequence QEVNNNNNNN. Basic and acidic residues predominate over residues 462–471; that stretch reads EKYQKDKEDS. Over residues 472-500 the composition is skewed to low complexity; it reads SSTTSNSTISSSSSPSPSSSSTTTTTTTS. The span at 501–525 shows a compositional bias: basic and acidic residues; it reads QKKDETQKKEKSTKKERNSDSKKRK.

It is found in the nucleus. In terms of biological role, involved in mono-, di- and trimethylation at 'Lys-4' of histone H3. Histone H3 'Lys-4' methylation represents a specific tag for epigenetic transcriptional activation. In Dictyostelium discoideum (Social amoeba), this protein is Retinoblastoma-binding-like protein E.